A 224-amino-acid polypeptide reads, in one-letter code: uncharacterized protein (224 aa).

An N-terminal signal peptide occupies residues 1-16; sequence MKILYSFLLLPFFSCA.

This is an uncharacterized protein from Escherichia coli.